Consider the following 261-residue polypeptide: Glutamate 5-kinase (261 aa).

Lys7 is an ATP binding site. Residues Ser46, Asp131, and Asn147 each coordinate substrate. ATP is bound by residues 167-168 (SD) and 209-215 (TGGIVTK).

The protein belongs to the glutamate 5-kinase family.

It localises to the cytoplasm. The catalysed reaction is L-glutamate + ATP = L-glutamyl 5-phosphate + ADP. It participates in amino-acid biosynthesis; L-proline biosynthesis; L-glutamate 5-semialdehyde from L-glutamate: step 1/2. In terms of biological role, catalyzes the transfer of a phosphate group to glutamate to form L-glutamate 5-phosphate. This Wolinella succinogenes (strain ATCC 29543 / DSM 1740 / CCUG 13145 / JCM 31913 / LMG 7466 / NCTC 11488 / FDC 602W) (Vibrio succinogenes) protein is Glutamate 5-kinase.